A 657-amino-acid polypeptide reads, in one-letter code: Probable potassium transport system protein Kup (657 aa).

12 helical membrane passes run 15-35 (SFLI…LYVM), 48-68 (ITPD…TLLT), 100-120 (WLII…MLTP), 147-167 (IIII…HFGT), 173-193 (IFGP…IVNL), 219-239 (LGFF…ALYS), 251-271 (LTWP…AAWI), 292-312 (MMPS…AIIA), 348-368 (IYMP…VLYF), 378-398 (YGLS…NYLL), 403-423 (PLPI…SFLI), and 431-451 (KGGF…YIWI).

It belongs to the HAK/KUP transporter (TC 2.A.72) family.

Its subcellular location is the cell membrane. It catalyses the reaction K(+)(in) + H(+)(in) = K(+)(out) + H(+)(out). In terms of biological role, transport of potassium into the cell. Likely operates as a K(+):H(+) symporter. The chain is Probable potassium transport system protein Kup from Clostridium perfringens (strain SM101 / Type A).